We begin with the raw amino-acid sequence, 450 residues long: Tubulin alpha-5 chain (450 aa).

GTP is bound by residues glutamine 11, glutamate 71, glycine 144, threonine 145, threonine 179, asparagine 206, and asparagine 228. Glutamate 71 serves as a coordination point for Mg(2+). Glutamate 254 is a catalytic residue.

The protein belongs to the tubulin family. As to quaternary structure, dimer of alpha and beta chains. A typical microtubule is a hollow water-filled tube with an outer diameter of 25 nm and an inner diameter of 15 nM. Alpha-beta heterodimers associate head-to-tail to form protofilaments running lengthwise along the microtubule wall with the beta-tubulin subunit facing the microtubule plus end conferring a structural polarity. Microtubules usually have 13 protofilaments but different protofilament numbers can be found in some organisms and specialized cells. The cofactor is Mg(2+). In terms of processing, undergoes a tyrosination/detyrosination cycle, the cyclic removal and re-addition of a C-terminal tyrosine residue by the enzymes tubulin tyrosine carboxypeptidase (TTCP) and tubulin tyrosine ligase (TTL), respectively.

Its subcellular location is the cytoplasm. The protein localises to the cytoskeleton. It catalyses the reaction GTP + H2O = GDP + phosphate + H(+). Its function is as follows. Tubulin is the major constituent of microtubules, a cylinder consisting of laterally associated linear protofilaments composed of alpha- and beta-tubulin heterodimers. Microtubules grow by the addition of GTP-tubulin dimers to the microtubule end, where a stabilizing cap forms. Below the cap, tubulin dimers are in GDP-bound state, owing to GTPase activity of alpha-tubulin. This is Tubulin alpha-5 chain (TUBA5) from Zea mays (Maize).